A 154-amino-acid chain; its full sequence is Aspartate carbamoyltransferase regulatory chain (154 aa).

Residues C109, C114, C138, and C141 each contribute to the Zn(2+) site.

Belongs to the PyrI family. In terms of assembly, contains catalytic and regulatory chains. It depends on Zn(2+) as a cofactor.

Involved in allosteric regulation of aspartate carbamoyltransferase. This Yersinia pestis protein is Aspartate carbamoyltransferase regulatory chain.